Consider the following 52-residue polypeptide: Metchnikowin (52 aa).

Residues 1 to 24 (MQLNLGAIFLALLGVMATATSVLA) form the signal peptide. A propeptide spanning residues 25-26 (EP) is cleaved from the precursor. The disordered stretch occupies residues 28–52 (RHQGPIFDTRPSPFNPNQPRPGPIY). Over residues 40–52 (PFNPNQPRPGPIY) the composition is skewed to pro residues.

In terms of tissue distribution, hemolymph (at protein level). Highest expression in fat body.

Its subcellular location is the secreted. Its function is as follows. Potent antifungal and antibacterial activity against Gram-positive bacteria. This is Metchnikowin (Mtk) from Drosophila melanogaster (Fruit fly).